We begin with the raw amino-acid sequence, 498 residues long: UDP-N-acetylmuramate--L-alanine ligase (498 aa).

Gly-122–Ser-128 contacts ATP.

This sequence belongs to the MurCDEF family.

Its subcellular location is the cytoplasm. The catalysed reaction is UDP-N-acetyl-alpha-D-muramate + L-alanine + ATP = UDP-N-acetyl-alpha-D-muramoyl-L-alanine + ADP + phosphate + H(+). The protein operates within cell wall biogenesis; peptidoglycan biosynthesis. Functionally, cell wall formation. This chain is UDP-N-acetylmuramate--L-alanine ligase, found in Corynebacterium jeikeium (strain K411).